The sequence spans 471 residues: Putative metabolite transport protein YncC (471 aa).

A run of 12 helical transmembrane segments spans residues 13–33 (LIMI…GVIN), 50–70 (VTEG…ALLC), 88–108 (FLFF…IMAV), 111–131 (FLLG…LAEM), 146–166 (LMIV…GVTM), 175–195 (YMLV…LKVP), 256–276 (LLWI…NSIM), 295–315 (IANI…IWLV), 323–343 (ILLI…IFSI), 358–378 (LTVL…WLVI), 393–413 (ISVF…PILL), and 416–436 (VGLS…IGFV).

This sequence belongs to the major facilitator superfamily. Sugar transporter (TC 2.A.1.1) family.

The protein resides in the cell membrane. The chain is Putative metabolite transport protein YncC (yncC) from Bacillus subtilis (strain 168).